The chain runs to 214 residues: tRNA (guanine-N(7)-)-methyltransferase (214 aa).

S-adenosyl-L-methionine-binding residues include glutamate 43, glutamate 68, aspartate 95, and aspartate 117. Aspartate 117 is an active-site residue. Residues lysine 121, aspartate 153, and 190–193 each bind substrate; that span reads TEYE.

This sequence belongs to the class I-like SAM-binding methyltransferase superfamily. TrmB family.

The catalysed reaction is guanosine(46) in tRNA + S-adenosyl-L-methionine = N(7)-methylguanosine(46) in tRNA + S-adenosyl-L-homocysteine. It participates in tRNA modification; N(7)-methylguanine-tRNA biosynthesis. Catalyzes the formation of N(7)-methylguanine at position 46 (m7G46) in tRNA. The sequence is that of tRNA (guanine-N(7)-)-methyltransferase from Staphylococcus aureus (strain COL).